We begin with the raw amino-acid sequence, 206 residues long: Small ribosomal subunit protein uS4 (206 aa).

One can recognise an S4 RNA-binding domain in the interval Gly-96–Lys-156.

This sequence belongs to the universal ribosomal protein uS4 family. As to quaternary structure, part of the 30S ribosomal subunit. Contacts protein S5. The interaction surface between S4 and S5 is involved in control of translational fidelity.

In terms of biological role, one of the primary rRNA binding proteins, it binds directly to 16S rRNA where it nucleates assembly of the body of the 30S subunit. Its function is as follows. With S5 and S12 plays an important role in translational accuracy. The protein is Small ribosomal subunit protein uS4 of Glaesserella parasuis serovar 5 (strain SH0165) (Haemophilus parasuis).